Consider the following 541-residue polypeptide: Membrane protein insertase YidC (541 aa).

6 helical membrane passes run 6 to 26 (NILL…WQAD), 325 to 345 (LVVD…LLMF), 349 to 369 (FVGN…GLLF), 420 to 440 (GGCL…WVLL), 457 to 477 (LSVQ…MFIM), and 500 to 520 (VIFT…WLVG).

The protein belongs to the OXA1/ALB3/YidC family. Type 1 subfamily. As to quaternary structure, interacts with the Sec translocase complex via SecD. Specifically interacts with transmembrane segments of nascent integral membrane proteins during membrane integration.

It localises to the cell inner membrane. Functionally, required for the insertion and/or proper folding and/or complex formation of integral membrane proteins into the membrane. Involved in integration of membrane proteins that insert both dependently and independently of the Sec translocase complex, as well as at least some lipoproteins. Aids folding of multispanning membrane proteins. The chain is Membrane protein insertase YidC from Shewanella sp. (strain W3-18-1).